The chain runs to 430 residues: Adenylosuccinate synthetase (430 aa).

Residues 12–18 and 40–42 contribute to the GTP site; these read GDEGKGK and GHT. Catalysis depends on aspartate 13, which acts as the Proton acceptor. Mg(2+) contacts are provided by aspartate 13 and glycine 40. IMP is bound by residues 13–16, 38–41, threonine 128, arginine 142, glutamine 223, threonine 238, and arginine 302; these read DEGK and NAGH. Histidine 41 functions as the Proton donor in the catalytic mechanism. 298 to 304 contacts substrate; sequence TTTGRPR. Residues arginine 304, 330–332, and 412–414 each bind GTP; these read LLD and SVG.

It belongs to the adenylosuccinate synthetase family. In terms of assembly, homodimer. Mg(2+) serves as cofactor.

The protein resides in the cytoplasm. It carries out the reaction IMP + L-aspartate + GTP = N(6)-(1,2-dicarboxyethyl)-AMP + GDP + phosphate + 2 H(+). The protein operates within purine metabolism; AMP biosynthesis via de novo pathway; AMP from IMP: step 1/2. Its function is as follows. Plays an important role in the de novo pathway of purine nucleotide biosynthesis. Catalyzes the first committed step in the biosynthesis of AMP from IMP. This Listeria innocua serovar 6a (strain ATCC BAA-680 / CLIP 11262) protein is Adenylosuccinate synthetase.